A 96-amino-acid chain; its full sequence is Large ribosomal subunit protein eL43 (96 aa).

The C4-type zinc finger occupies 41 to 62 (CPVCAFPKLKRAGTSIWVCDKC).

It belongs to the eukaryotic ribosomal protein eL43 family. Zn(2+) serves as cofactor.

In Methanococcus vannielii (strain ATCC 35089 / DSM 1224 / JCM 13029 / OCM 148 / SB), this protein is Large ribosomal subunit protein eL43.